A 172-amino-acid chain; its full sequence is UPF0114 protein PMI3225 (172 aa).

4 helical membrane passes run 15 to 35 (LFAPVYIGLSLGLLALTIKFF), 57 to 77 (LLSLIDLALVGGLLIMVIFSG), 108 to 128 (KVAASIVAISSIHLLGVFMDL), and 136 to 156 (LLWYVVLHLTFVFSAFVMGYL).

Belongs to the UPF0114 family.

It is found in the cell membrane. This Proteus mirabilis (strain HI4320) protein is UPF0114 protein PMI3225.